Reading from the N-terminus, the 383-residue chain is L-lactate dehydrogenase (383 aa).

An FMN hydroxy acid dehydrogenase domain is found at 1-380 (MIISSGNDYR…NADCLVQAIK (380 aa)). Substrate is bound at residue Tyr-24. FMN is bound by residues Ser-106 and Gln-127. Residue Tyr-129 coordinates substrate. Thr-155 provides a ligand contact to FMN. Substrate is bound at residue Arg-164. Lys-251 contributes to the FMN binding site. The active-site Proton acceptor is His-275. Arg-278 provides a ligand contact to substrate. 306 to 330 (DSGIRNGLDVVRMLALGADTVLLGR) provides a ligand contact to FMN.

This sequence belongs to the FMN-dependent alpha-hydroxy acid dehydrogenase family. FMN serves as cofactor.

It is found in the cell inner membrane. It catalyses the reaction (S)-lactate + A = pyruvate + AH2. In terms of biological role, catalyzes the conversion of L-lactate to pyruvate. Is coupled to the respiratory chain. The sequence is that of L-lactate dehydrogenase from Acinetobacter baumannii (strain AB307-0294).